We begin with the raw amino-acid sequence, 120 residues long: MFYWILLALAIATEITGTLSMKWASVGNGNAGFILMLVMITLSYIFLSFAVKKIALGVAYALWEGIGILFITIFSVLLFDEALSTMKIAGLLTLVAGIVLIKSGTRKPGKPVKEAARATI.

A run of 4 helical transmembrane segments spans residues 1–21, 31–51, 54–74, and 81–101; these read MFYW…TLSM, AGFI…SFAV, IALG…ITIF, and EALS…IVLI.

It belongs to the drug/metabolite transporter (DMT) superfamily. Small multidrug resistance (SMR) (TC 2.A.7.1) family. MdtJ subfamily. Forms a complex with MdtI.

The protein resides in the cell inner membrane. Catalyzes the excretion of spermidine. The sequence is that of Spermidine export protein MdtJ from Salmonella agona (strain SL483).